We begin with the raw amino-acid sequence, 246 residues long: 3-deoxy-manno-octulosonate cytidylyltransferase (246 aa).

It belongs to the KdsB family.

It is found in the cytoplasm. The enzyme catalyses 3-deoxy-alpha-D-manno-oct-2-ulosonate + CTP = CMP-3-deoxy-beta-D-manno-octulosonate + diphosphate. It participates in nucleotide-sugar biosynthesis; CMP-3-deoxy-D-manno-octulosonate biosynthesis; CMP-3-deoxy-D-manno-octulosonate from 3-deoxy-D-manno-octulosonate and CTP: step 1/1. Its pathway is bacterial outer membrane biogenesis; lipopolysaccharide biosynthesis. In terms of biological role, activates KDO (a required 8-carbon sugar) for incorporation into bacterial lipopolysaccharide in Gram-negative bacteria. This is 3-deoxy-manno-octulosonate cytidylyltransferase from Rickettsia massiliae (strain Mtu5).